Here is a 734-residue protein sequence, read N- to C-terminus: Methylcrotonoyl-CoA carboxylase subunit alpha, mitochondrial (734 aa).

The N-terminal 25 residues, 1–25 (MSMMTVWALRRNVRRKNHSMLVRYI), are a transit peptide targeting the mitochondrion. The Biotin carboxylation domain occupies 37-484 (CIEKILVANR…ETHFIEHHKS (448 aa)). ATP is bound by residues lysine 152, glutamate 236, and histidine 271. Positions 156 to 354 (KRIMGAAGVP…LVEWQIRVAN (199 aa)) constitute an ATP-grasp domain. Residues glutamate 311, glutamate 325, and asparagine 327 each contribute to the Mn(2+) site. Residue arginine 329 is part of the active site. The residue at position 645 (serine 645) is a Phosphoserine. The disordered stretch occupies residues 645–666 (SEDEEGVQHRTSSETSSHPPGT). One can recognise a Biotinyl-binding domain in the interval 657 to 733 (SETSSHPPGT…SDGSALFRIK (77 aa)). Residue lysine 699 is modified to N6-biotinyllysine.

In terms of assembly, probably a heterodimer composed of biotin-containing alpha subunits and beta subunits. The cofactor is biotin. Requires Mn(2+) as cofactor. In roots, cotyledons, leaves, flowers, ovaries, siliques and embryos.

Its subcellular location is the mitochondrion matrix. It carries out the reaction 3-methylbut-2-enoyl-CoA + hydrogencarbonate + ATP = 3-methyl-(2E)-glutaconyl-CoA + ADP + phosphate + H(+). Its pathway is amino-acid degradation; L-leucine degradation; (S)-3-hydroxy-3-methylglutaryl-CoA from 3-isovaleryl-CoA: step 2/3. Functionally, biotin-attachment subunit of the 3-methylcrotonyl-CoA carboxylase, an enzyme that catalyzes the conversion of 3-methylcrotonyl-CoA to 3-methylglutaconyl-CoA, a critical step for leucine and isovaleric acid catabolism. The chain is Methylcrotonoyl-CoA carboxylase subunit alpha, mitochondrial (MCCA) from Arabidopsis thaliana (Mouse-ear cress).